We begin with the raw amino-acid sequence, 431 residues long: MKTPRLLQYLAYPQKITGPIIEAELRDVAIGELCEIRRGWHQKQVVARAQVVGLQRERTVLSLIGNAQGLSRDVVLYPTGRALSAWVGYSVLGAVLDPTGKIVERFTPEVAPISEERVIDVAPPSYASRVGVREPLITGVRAIDGLLTCGVGQRMGIFASAGCGKTMLMHMLIEQTEADVFVIGLIGERGREVTEFVDMLRASHKKEKCVLVFATSDFPSVDRCNAAQLATTVAEYFRDQGKRVVLFIDSMTRYARALRDVALASGERPARRGYPASVFDNLPRLLERPGATSEGSITAFYTVLLESEEEADPMADEIRSILDGHLYLSRKLAGQGHYPAIDVLKSVSRVFGQVTTPTHAEQASAVRKLMTRLEELQLFIDLGEYRPGENIDNDRAMQMRDSLKAWLCQPVAQYSSFDDTLSGMNAFADQN.

162 to 167 (GCGKTM) provides a ligand contact to ATP.

It belongs to the ATPase alpha/beta chains family. T3SS ATPase subfamily. As to quaternary structure, the core secretion machinery of the T3SS is composed of approximately 20 different proteins, including cytoplasmic components, a base, an export apparatus and a needle. This subunit is part of the cytosolic complex. Forms homohexamers.

Its subcellular location is the cytoplasm. It catalyses the reaction ATP + H2O + cellular proteinSide 1 = ADP + phosphate + cellular proteinSide 2.. Functionally, ATPase component of the type III secretion system (T3SS), also called injectisome, which is used to inject bacterial effector proteins into eukaryotic host cells. Acts as a molecular motor to provide the energy that is required for the export of proteins. Required for type III secretion apparatus (T3SA) formation, proper protein secretion, host cell invasion and virulence. May play a critical role in T3SS substrate recognition, disassembly of the effector/chaperone complex and unfolding of the effector in an ATP-dependent manner prior to secretion. The polypeptide is SPI-1 type 3 secretion system ATPase (Salmonella typhi).